The primary structure comprises 1430 residues: DNA-directed RNA polymerase subunit beta' (1430 aa).

The Zn(2+) site is built by cysteine 71, cysteine 73, cysteine 86, and cysteine 89. 3 residues coordinate Mg(2+): aspartate 461, aspartate 463, and aspartate 465. Zn(2+) contacts are provided by cysteine 815, cysteine 889, cysteine 896, and cysteine 899. The segment at 1388-1430 is disordered; it reads RRQEAPAPAATPEQQAEEVFASLGQGEGEGPSPSDEASGPEVE. A compositionally biased stretch (low complexity) spans 1392 to 1405; that stretch reads APAPAATPEQQAEE.

The protein belongs to the RNA polymerase beta' chain family. The RNAP catalytic core consists of 2 alpha, 1 beta, 1 beta' and 1 omega subunit. When a sigma factor is associated with the core the holoenzyme is formed, which can initiate transcription. Mg(2+) is required as a cofactor. Requires Zn(2+) as cofactor.

It carries out the reaction RNA(n) + a ribonucleoside 5'-triphosphate = RNA(n+1) + diphosphate. Functionally, DNA-dependent RNA polymerase catalyzes the transcription of DNA into RNA using the four ribonucleoside triphosphates as substrates. This is DNA-directed RNA polymerase subunit beta' from Halorhodospira halophila (strain DSM 244 / SL1) (Ectothiorhodospira halophila (strain DSM 244 / SL1)).